Reading from the N-terminus, the 331-residue chain is UPF0194 membrane protein YbhG (331 aa).

Positions 1–19 (MKKPVVIGLAIAAIVAVIA) are cleaved as a signal peptide. The stretch at 107–208 (EEIAQAAAAV…LDLQDTTLIA (102 aa)) forms a coiled coil.

It belongs to the UPF0194 family.

It localises to the periplasm. The sequence is that of UPF0194 membrane protein YbhG from Salmonella gallinarum (strain 287/91 / NCTC 13346).